A 319-amino-acid chain; its full sequence is CCAAT/enhancer-binding protein homolog 1 (319 aa).

The interval serine 53–arginine 67 is n' domain; required for axon regeneration. A disordered region spans residues threonine 163–lysine 319. Over residues valine 171 to serine 181 the composition is skewed to basic and acidic residues. Positions glutamate 182–tyrosine 198 are enriched in acidic residues. Basic and acidic residues-rich tracts occupy residues leucine 225–arginine 248, lysine 255–glutamate 274, serine 281–aspartate 291, and proline 302–lysine 319. The bZIP domain occupies glutamate 233 to methionine 308. Residues lysine 237 to arginine 271 form a basic motif region. Residues leucine 275–methionine 308 are leucine-zipper.

It belongs to the bZIP family. C/EBP subfamily. May interact with transcription factor ets-4. May interact (via N-terminus) with nipi-3. May interact (via N-terminus) with importin subunit alpha ima-3. As to expression, expressed in touch and motor neurons.

It is found in the synapse. It localises to the cytoplasm. The protein resides in the nucleus. Its subcellular location is the cell projection. The protein localises to the axon. In terms of biological role, transcription factor. Binds to promoter regions of target genes, perhaps at the motif 5'-[AGCT]TT[AGT][TC]GAAA[ACT]-3'. Modulates expression of genes involved in development and in stress responses, including those regulating the p38/MAPK signaling pathways such as MAPKK sek-1 and phosphatase vhp-1. Involved in innate immunity. Plays a role in repressing the response to infection by the Gram-negative bacterium P.aeruginosa, perhaps acting independently of the pmk-1 or pmk-3 p38/MAPK pathways. However, also plays a protective role in the response to infection by P.aeruginosa. Required in axonal regrowth following injury and synaptogenesis. Following axon injury, in concert with transcription factor ets-4, activates expression of receptor tyrosine kinase svh-2. May function downstream of the Ca2+-activated p38/MAPK pathway to promote axon regeneration. Plays a role in modulating polymerization of neuronal microtubules. Involved in modulating lipid homeostasis. In Caenorhabditis elegans, this protein is CCAAT/enhancer-binding protein homolog 1.